We begin with the raw amino-acid sequence, 200 residues long: Probable molybdenum cofactor guanylyltransferase (200 aa).

GTP contacts are provided by residues 9–11 (LAG), Lys-21, Asp-69, and Asp-100. Asp-100 is a binding site for Mg(2+).

It belongs to the MobA family. Mg(2+) serves as cofactor.

Its subcellular location is the cytoplasm. It catalyses the reaction Mo-molybdopterin + GTP + H(+) = Mo-molybdopterin guanine dinucleotide + diphosphate. Functionally, transfers a GMP moiety from GTP to Mo-molybdopterin (Mo-MPT) cofactor (Moco or molybdenum cofactor) to form Mo-molybdopterin guanine dinucleotide (Mo-MGD) cofactor. The polypeptide is Probable molybdenum cofactor guanylyltransferase (Bacillus thuringiensis (strain Al Hakam)).